A 312-amino-acid polypeptide reads, in one-letter code: DNA-directed RNA polymerase subunit alpha (312 aa).

The interval 1–226 (MIEFKKPNIT…EHFKAFESAD (226 aa)) is alpha N-terminal domain (alpha-NTD). The alpha C-terminal domain (alpha-CTD) stretch occupies residues 243 to 312 (KEKKLEMTIE…DLGLSLRQED (70 aa)).

Belongs to the RNA polymerase alpha chain family. Homodimer. The RNAP catalytic core consists of 2 alpha, 1 beta, 1 beta' and 1 omega subunit. When a sigma factor is associated with the core the holoenzyme is formed, which can initiate transcription.

It carries out the reaction RNA(n) + a ribonucleoside 5'-triphosphate = RNA(n+1) + diphosphate. In terms of biological role, DNA-dependent RNA polymerase catalyzes the transcription of DNA into RNA using the four ribonucleoside triphosphates as substrates. This is DNA-directed RNA polymerase subunit alpha from Lactobacillus delbrueckii subsp. bulgaricus (strain ATCC BAA-365 / Lb-18).